Reading from the N-terminus, the 97-residue chain is YcgL domain-containing protein PFLU_1517 (97 aa).

In terms of domain architecture, YcgL spans 3–87 (RICSIYRSKK…AEDEYIEHLP (85 aa)).

This chain is YcgL domain-containing protein PFLU_1517, found in Pseudomonas fluorescens (strain SBW25).